The chain runs to 185 residues: ATP-dependent protease subunit HslV (185 aa).

T12 is an active-site residue. Na(+)-binding residues include A168, C171, and T174.

This sequence belongs to the peptidase T1B family. HslV subfamily. In terms of assembly, a double ring-shaped homohexamer of HslV is capped on each side by a ring-shaped HslU homohexamer. The assembly of the HslU/HslV complex is dependent on binding of ATP.

It is found in the cytoplasm. The catalysed reaction is ATP-dependent cleavage of peptide bonds with broad specificity.. Its activity is regulated as follows. Allosterically activated by HslU binding. Functionally, protease subunit of a proteasome-like degradation complex believed to be a general protein degrading machinery. The chain is ATP-dependent protease subunit HslV from Cereibacter sphaeroides (strain ATCC 17025 / ATH 2.4.3) (Rhodobacter sphaeroides).